A 273-amino-acid polypeptide reads, in one-letter code: 4-hydroxy-3-methylbut-2-enyl diphosphate reductase (273 aa).

Residue Cys12 coordinates [4Fe-4S] cluster. His36 and His70 together coordinate (2E)-4-hydroxy-3-methylbut-2-enyl diphosphate. The dimethylallyl diphosphate site is built by His36 and His70. Isopentenyl diphosphate is bound by residues His36 and His70. Residue Cys92 coordinates [4Fe-4S] cluster. His120 contributes to the (2E)-4-hydroxy-3-methylbut-2-enyl diphosphate binding site. His120 contacts dimethylallyl diphosphate. His120 contributes to the isopentenyl diphosphate binding site. The active-site Proton donor is Glu122. Thr157 lines the (2E)-4-hydroxy-3-methylbut-2-enyl diphosphate pocket. Cys185 contributes to the [4Fe-4S] cluster binding site. (2E)-4-hydroxy-3-methylbut-2-enyl diphosphate-binding residues include Ser213, Ser214, Asn215, and Ser257. Residues Ser213, Ser214, Asn215, and Ser257 each contribute to the dimethylallyl diphosphate site. The isopentenyl diphosphate site is built by Ser213, Ser214, Asn215, and Ser257.

Belongs to the IspH family. [4Fe-4S] cluster is required as a cofactor.

It catalyses the reaction isopentenyl diphosphate + 2 oxidized [2Fe-2S]-[ferredoxin] + H2O = (2E)-4-hydroxy-3-methylbut-2-enyl diphosphate + 2 reduced [2Fe-2S]-[ferredoxin] + 2 H(+). The catalysed reaction is dimethylallyl diphosphate + 2 oxidized [2Fe-2S]-[ferredoxin] + H2O = (2E)-4-hydroxy-3-methylbut-2-enyl diphosphate + 2 reduced [2Fe-2S]-[ferredoxin] + 2 H(+). It functions in the pathway isoprenoid biosynthesis; dimethylallyl diphosphate biosynthesis; dimethylallyl diphosphate from (2E)-4-hydroxy-3-methylbutenyl diphosphate: step 1/1. The protein operates within isoprenoid biosynthesis; isopentenyl diphosphate biosynthesis via DXP pathway; isopentenyl diphosphate from 1-deoxy-D-xylulose 5-phosphate: step 6/6. Functionally, catalyzes the conversion of 1-hydroxy-2-methyl-2-(E)-butenyl 4-diphosphate (HMBPP) into a mixture of isopentenyl diphosphate (IPP) and dimethylallyl diphosphate (DMAPP). Acts in the terminal step of the DOXP/MEP pathway for isoprenoid precursor biosynthesis. The polypeptide is 4-hydroxy-3-methylbut-2-enyl diphosphate reductase (Helicobacter hepaticus (strain ATCC 51449 / 3B1)).